Consider the following 288-residue polypeptide: Phosphatidylserine decarboxylase proenzyme (288 aa).

Residues Asp-101, His-158, and Ser-262 each act as charge relay system; for autoendoproteolytic cleavage activity in the active site. The active-site Schiff-base intermediate with substrate; via pyruvic acid; for decarboxylase activity is the Ser-262. Pyruvic acid (Ser); by autocatalysis is present on Ser-262.

The protein belongs to the phosphatidylserine decarboxylase family. PSD-B subfamily. Prokaryotic type I sub-subfamily. Heterodimer of a large membrane-associated beta subunit and a small pyruvoyl-containing alpha subunit. It depends on pyruvate as a cofactor. Is synthesized initially as an inactive proenzyme. Formation of the active enzyme involves a self-maturation process in which the active site pyruvoyl group is generated from an internal serine residue via an autocatalytic post-translational modification. Two non-identical subunits are generated from the proenzyme in this reaction, and the pyruvate is formed at the N-terminus of the alpha chain, which is derived from the carboxyl end of the proenzyme. The autoendoproteolytic cleavage occurs by a canonical serine protease mechanism, in which the side chain hydroxyl group of the serine supplies its oxygen atom to form the C-terminus of the beta chain, while the remainder of the serine residue undergoes an oxidative deamination to produce ammonia and the pyruvoyl prosthetic group on the alpha chain. During this reaction, the Ser that is part of the protease active site of the proenzyme becomes the pyruvoyl prosthetic group, which constitutes an essential element of the active site of the mature decarboxylase.

The protein resides in the cell membrane. It carries out the reaction a 1,2-diacyl-sn-glycero-3-phospho-L-serine + H(+) = a 1,2-diacyl-sn-glycero-3-phosphoethanolamine + CO2. It functions in the pathway phospholipid metabolism; phosphatidylethanolamine biosynthesis; phosphatidylethanolamine from CDP-diacylglycerol: step 2/2. Functionally, catalyzes the formation of phosphatidylethanolamine (PtdEtn) from phosphatidylserine (PtdSer). In Alkalilimnicola ehrlichii (strain ATCC BAA-1101 / DSM 17681 / MLHE-1), this protein is Phosphatidylserine decarboxylase proenzyme.